A 305-amino-acid chain; its full sequence is Myb-like transcriptional regulator basR (305 aa).

3 Myb-like domains span residues 5–59 (RRRW…YNRF), 60–110 (TGGL…HHCL), and 111–162 (NPEL…TILS). Positions 175–215 (PCCDSPSPSKSSRRPPSTPTSTPQVPGSRQGSSYDPYDYGS) are disordered. Polar residues predominate over residues 198-207 (QVPGSRQGSS).

Its subcellular location is the nucleus. In terms of biological role, transcription regulator that acts as a central regulatory node for the integration of external bacterial signals leading to the regulation of secondary metabolite gene clusters such as orsellinic, lecanoric acid, cichorine, 2,4-dihydroxy-3-methyl-6-(2-oxopropyl)benzaldehyde (dba), emericellamide or microperfuranone clusters. The sequence is that of Myb-like transcriptional regulator basR from Emericella nidulans (strain FGSC A4 / ATCC 38163 / CBS 112.46 / NRRL 194 / M139) (Aspergillus nidulans).